A 92-amino-acid polypeptide reads, in one-letter code: Small ribosomal subunit protein uS19 (92 aa).

Belongs to the universal ribosomal protein uS19 family.

Its function is as follows. Protein S19 forms a complex with S13 that binds strongly to the 16S ribosomal RNA. The chain is Small ribosomal subunit protein uS19 from Caulobacter sp. (strain K31).